Here is a 188-residue protein sequence, read N- to C-terminus: Phosphoribosylglycinamide formyltransferase (188 aa).

N(1)-(5-phospho-beta-D-ribosyl)glycinamide is bound at residue 12-14; it reads GSN. Residues Lys66, 91 to 94, and Asn108 each bind (6R)-10-formyltetrahydrofolate; that span reads MRLV. The Proton donor role is filled by His110.

It belongs to the GART family.

The catalysed reaction is N(1)-(5-phospho-beta-D-ribosyl)glycinamide + (6R)-10-formyltetrahydrofolate = N(2)-formyl-N(1)-(5-phospho-beta-D-ribosyl)glycinamide + (6S)-5,6,7,8-tetrahydrofolate + H(+). The protein operates within purine metabolism; IMP biosynthesis via de novo pathway; N(2)-formyl-N(1)-(5-phospho-D-ribosyl)glycinamide from N(1)-(5-phospho-D-ribosyl)glycinamide (10-formyl THF route): step 1/1. Its function is as follows. Catalyzes the transfer of a formyl group from 10-formyltetrahydrofolate to 5-phospho-ribosyl-glycinamide (GAR), producing 5-phospho-ribosyl-N-formylglycinamide (FGAR) and tetrahydrofolate. The sequence is that of Phosphoribosylglycinamide formyltransferase from Staphylococcus epidermidis (strain ATCC 35984 / DSM 28319 / BCRC 17069 / CCUG 31568 / BM 3577 / RP62A).